We begin with the raw amino-acid sequence, 335 residues long: Mesoderm-specific transcript protein (335 aa).

Transmembrane regions (helical) follow at residues 13–33 (WWVQ…HIPP) and 63–83 (VGVV…TSSY). In terms of domain architecture, AB hydrolase-1 spans 71–310 (IVVLLHGFPT…PRSTVSILDD (240 aa)). An RVIALD motif is present at residues 98–103 (RVIALD). Asparagine 163 is a glycosylation site (N-linked (GlcNAc...) asparagine). The chain crosses the membrane as a helical span at residues 266-286 (VGALASVSIPIHFIYGPLDPI).

The protein belongs to the AB hydrolase superfamily. Expressed in mesodermal tissues. Isoform 1 is exclusively expressed from the paternal allele in all fetal tissues and cell lines examined, whereas isoform 2 is preferentially expressed from the paternal allele in a tissue-type-specific manner.

It is found in the endoplasmic reticulum membrane. This is Mesoderm-specific transcript protein (Mest) from Mus musculus (Mouse).